Here is a 212-residue protein sequence, read N- to C-terminus: uncharacterized protein (212 aa).

A helical transmembrane segment spans residues 11-31; the sequence is NLIFFQFIVYFFFISLTILII.

The protein resides in the membrane. This is an uncharacterized protein from Rickettsia prowazekii (strain Madrid E).